The following is a 253-amino-acid chain: Negative modulator of initiation of replication (253 aa).

The interval 66-112 is disordered; sequence SNQEQQTGHGHAGEPSAVQTPESNDYAKAQPHSSGYQPGQLEGHKSE. An interaction with DNA region spans residues 154 to 155; the sequence is AV.

This sequence belongs to the SeqA family. Homodimer. Polymerizes to form helical filaments.

The protein resides in the cytoplasm. Its function is as follows. Negative regulator of replication initiation, which contributes to regulation of DNA replication and ensures that replication initiation occurs exactly once per chromosome per cell cycle. Binds to pairs of hemimethylated GATC sequences in the oriC region, thus preventing assembly of replication proteins and re-initiation at newly replicated origins. Repression is relieved when the region becomes fully methylated. The sequence is that of Negative modulator of initiation of replication from Shewanella denitrificans (strain OS217 / ATCC BAA-1090 / DSM 15013).